The following is a 350-amino-acid chain: Flap endonuclease 1 (350 aa).

Positions Met1–Lys101 are N-domain. Mg(2+)-binding residues include Asp30, Asp83, Glu155, Glu157, Asp176, Asp178, and Asp239. Residues Glu119–Gly261 are I-domain. The interval Arg341–Phe349 is interaction with PCNA.

The protein belongs to the XPG/RAD2 endonuclease family. FEN1 subfamily. Interacts with PCNA. PCNA stimulates the nuclease activity without altering cleavage specificity. Mg(2+) serves as cofactor.

Structure-specific nuclease with 5'-flap endonuclease and 5'-3' exonuclease activities involved in DNA replication and repair. During DNA replication, cleaves the 5'-overhanging flap structure that is generated by displacement synthesis when DNA polymerase encounters the 5'-end of a downstream Okazaki fragment. Binds the unpaired 3'-DNA end and kinks the DNA to facilitate 5' cleavage specificity. Cleaves one nucleotide into the double-stranded DNA from the junction in flap DNA, leaving a nick for ligation. Also involved in the base excision repair (BER) pathway. Acts as a genome stabilization factor that prevents flaps from equilibrating into structures that lead to duplications and deletions. Also possesses 5'-3' exonuclease activity on nicked or gapped double-stranded DNA. In Aeropyrum pernix (strain ATCC 700893 / DSM 11879 / JCM 9820 / NBRC 100138 / K1), this protein is Flap endonuclease 1.